The sequence spans 609 residues: Glutamine--fructose-6-phosphate aminotransferase [isomerizing] (609 aa).

Cys2 functions as the Nucleophile; for GATase activity in the catalytic mechanism. The Glutamine amidotransferase type-2 domain occupies 2-217 (CGIVGAIAGR…DGDTAEIRRD (216 aa)). SIS domains lie at 285–425 (AESV…LRGA) and 458–599 (WAEC…VDKP). Catalysis depends on Lys604, which acts as the For Fru-6P isomerization activity.

As to quaternary structure, homodimer.

It localises to the cytoplasm. It carries out the reaction D-fructose 6-phosphate + L-glutamine = D-glucosamine 6-phosphate + L-glutamate. Its function is as follows. Catalyzes the first step in hexosamine metabolism, converting fructose-6P into glucosamine-6P using glutamine as a nitrogen source. This is Glutamine--fructose-6-phosphate aminotransferase [isomerizing] from Xylella fastidiosa (strain Temecula1 / ATCC 700964).